A 291-amino-acid polypeptide reads, in one-letter code: Transmembrane protein 41B (291 aa).

Positions 1 to 11 are enriched in basic and acidic residues; sequence MAKGRVADRSP. Positions 1–43 are disordered; it reads MAKGRVADRSPTEMLHSTPAGDRAVRTQGSAAPGSKDHLNEKP. A Phosphothreonine modification is found at Thr-18. At Ser-35 the chain carries Phosphoserine. The next 6 membrane-spanning stretches (helical) occupy residues 52–72, 109–129, 147–169, 197–217, 225–245, and 262–282; these read TSLL…FLVY, FYVQ…TFAI, LALF…LSYL, LINY…FINI, PLKV…FVAI, and SWSS…PAIF. The tract at residues 140 to 251 is VTT domain; required for its function in autophagy; sequence GFLYPFPLAL…FVAIKAGTTL (112 aa).

Belongs to the TMEM41 family. In terms of assembly, interacts with VMP1. Interacts with COPA, COPB1, VDAC1 and ERLIN2. Interacts with ATG2A. Interacts with SURF4. In terms of tissue distribution, expressed in brain, spinal cord, kidney and first lumbar dorsal root ganglia during postnatal development. Expressed in motor neurons and proprioceptive neurons.

It is found in the endoplasmic reticulum membrane. The protein localises to the endomembrane system. It catalyses the reaction a 1,2-diacyl-sn-glycero-3-phospho-L-serine(in) = a 1,2-diacyl-sn-glycero-3-phospho-L-serine(out). It carries out the reaction cholesterol(in) = cholesterol(out). The catalysed reaction is a 1,2-diacyl-sn-glycero-3-phosphocholine(in) = a 1,2-diacyl-sn-glycero-3-phosphocholine(out). The enzyme catalyses a 1,2-diacyl-sn-glycero-3-phosphoethanolamine(in) = a 1,2-diacyl-sn-glycero-3-phosphoethanolamine(out). Phospholipid scramblase involved in lipid homeostasis and membrane dynamics processes. Has phospholipid scramblase activity toward cholesterol and phosphatidylserine, as well as phosphatidylethanolamine and phosphatidylcholine. Required for autophagosome formation: participates in early stages of autophagosome biogenesis at the endoplasmic reticulum (ER) membrane by reequilibrating the leaflets of the ER as lipids are extracted by ATG2 (ATG2A or ATG2B) to mediate autophagosome assembly. In addition to autophagy, involved in other processes in which phospholipid scramblase activity is required. Required for normal motor neuron development. The protein is Transmembrane protein 41B of Mus musculus (Mouse).